A 262-amino-acid polypeptide reads, in one-letter code: Type III pantothenate kinase (262 aa).

6–13 (DVGNTNAV) provides a ligand contact to ATP. Substrate is bound by residues Tyr-100 and 107–110 (GADR). Residue Asp-109 is the Proton acceptor of the active site. Asp-129 contributes to the K(+) binding site. Thr-132 serves as a coordination point for ATP. Thr-184 contacts substrate.

The protein belongs to the type III pantothenate kinase family. Homodimer. It depends on NH4(+) as a cofactor. Requires K(+) as cofactor.

The protein localises to the cytoplasm. It catalyses the reaction (R)-pantothenate + ATP = (R)-4'-phosphopantothenate + ADP + H(+). It participates in cofactor biosynthesis; coenzyme A biosynthesis; CoA from (R)-pantothenate: step 1/5. Catalyzes the phosphorylation of pantothenate (Pan), the first step in CoA biosynthesis. In Bacillus cytotoxicus (strain DSM 22905 / CIP 110041 / 391-98 / NVH 391-98), this protein is Type III pantothenate kinase.